The following is a 215-amino-acid chain: MTSSADRSPVEAMVSHAEGAISEDDIVAAARERAVDLGAGPVTPAVGALLSVFARLSGGKAVVEVGTGAGVSGLWLLSGMREDGVLTTIDVEPEHQRSAKQAFSEASIAPSRTRLIGGRAQEVLPRLADESYDLLVIDAAPADQPDFLAGGIRLLRPGGAVVIHGASAGGRAGDPSANDPDVVGVREAARIIADDGRFTAVLIPLGDGLLAATRD.

Residues valine 42, glutamate 64, 66–67 (GT), serine 72, aspartate 90, and valine 91 each bind S-adenosyl-L-methionine. A substrate-binding site is contributed by aspartate 138.

This sequence belongs to the class I-like SAM-binding methyltransferase superfamily. Cation-dependent O-methyltransferase family.

The protein is Putative O-methyltransferase MAB_1361c of Mycobacteroides abscessus (strain ATCC 19977 / DSM 44196 / CCUG 20993 / CIP 104536 / JCM 13569 / NCTC 13031 / TMC 1543 / L948) (Mycobacterium abscessus).